We begin with the raw amino-acid sequence, 313 residues long: Ribosomal RNA small subunit methyltransferase H (313 aa).

Residues 35-37 (GGH), Asp-55, Phe-79, Asp-101, and Gln-108 contribute to the S-adenosyl-L-methionine site.

This sequence belongs to the methyltransferase superfamily. RsmH family.

It localises to the cytoplasm. It catalyses the reaction cytidine(1402) in 16S rRNA + S-adenosyl-L-methionine = N(4)-methylcytidine(1402) in 16S rRNA + S-adenosyl-L-homocysteine + H(+). Specifically methylates the N4 position of cytidine in position 1402 (C1402) of 16S rRNA. This Shigella flexneri serotype 5b (strain 8401) protein is Ribosomal RNA small subunit methyltransferase H.